Consider the following 227-residue polypeptide: Phosphoribosylformylglycinamidine synthase subunit PurQ (227 aa).

A Glutamine amidotransferase type-1 domain is found at Phe3–Thr225. The active-site Nucleophile is Cys86. Residues His194 and Glu196 contribute to the active site.

In terms of assembly, part of the FGAM synthase complex composed of 1 PurL, 1 PurQ and 2 PurS subunits.

The protein localises to the cytoplasm. It catalyses the reaction N(2)-formyl-N(1)-(5-phospho-beta-D-ribosyl)glycinamide + L-glutamine + ATP + H2O = 2-formamido-N(1)-(5-O-phospho-beta-D-ribosyl)acetamidine + L-glutamate + ADP + phosphate + H(+). The catalysed reaction is L-glutamine + H2O = L-glutamate + NH4(+). Its pathway is purine metabolism; IMP biosynthesis via de novo pathway; 5-amino-1-(5-phospho-D-ribosyl)imidazole from N(2)-formyl-N(1)-(5-phospho-D-ribosyl)glycinamide: step 1/2. Part of the phosphoribosylformylglycinamidine synthase complex involved in the purines biosynthetic pathway. Catalyzes the ATP-dependent conversion of formylglycinamide ribonucleotide (FGAR) and glutamine to yield formylglycinamidine ribonucleotide (FGAM) and glutamate. The FGAM synthase complex is composed of three subunits. PurQ produces an ammonia molecule by converting glutamine to glutamate. PurL transfers the ammonia molecule to FGAR to form FGAM in an ATP-dependent manner. PurS interacts with PurQ and PurL and is thought to assist in the transfer of the ammonia molecule from PurQ to PurL. This is Phosphoribosylformylglycinamidine synthase subunit PurQ from Bacillus subtilis (strain 168).